The following is a 440-amino-acid chain: Xaa-Pro dipeptidase (440 aa).

Mn(2+)-binding residues include Asp-244, Asp-255, His-335, Glu-380, and Glu-419.

This sequence belongs to the peptidase M24B family. Bacterial-type prolidase subfamily. The cofactor is Mn(2+).

The enzyme catalyses Xaa-L-Pro dipeptide + H2O = an L-alpha-amino acid + L-proline. In terms of biological role, splits dipeptides with a prolyl residue in the C-terminal position. The protein is Xaa-Pro dipeptidase of Shewanella pealeana (strain ATCC 700345 / ANG-SQ1).